Consider the following 418-residue polypeptide: Glutamyl-tRNA reductase (418 aa).

Substrate contacts are provided by residues threonine 49–arginine 52, serine 109, glutamate 114–glutamine 116, and glutamine 120. The active-site Nucleophile is cysteine 50. Position 189 to 194 (glycine 189 to isoleucine 194) interacts with NADP(+).

The protein belongs to the glutamyl-tRNA reductase family. In terms of assembly, homodimer.

It catalyses the reaction (S)-4-amino-5-oxopentanoate + tRNA(Glu) + NADP(+) = L-glutamyl-tRNA(Glu) + NADPH + H(+). It participates in porphyrin-containing compound metabolism; protoporphyrin-IX biosynthesis; 5-aminolevulinate from L-glutamyl-tRNA(Glu): step 1/2. In terms of biological role, catalyzes the NADPH-dependent reduction of glutamyl-tRNA(Glu) to glutamate 1-semialdehyde (GSA). This is Glutamyl-tRNA reductase from Salmonella heidelberg (strain SL476).